The following is a 1029-amino-acid chain: Ig-like and fibronectin type-III domain-containing protein 1 (1029 aa).

The first 22 residues, 1 to 22 (MCNVAEDPSSFSTITIATTCRA), serve as a signal peptide directing secretion. Topologically, residues 23–918 (EWPKVSPCIA…RRSASKGSSS (896 aa)) are extracellular. Asn36, Asn93, Asn120, and Asn165 each carry an N-linked (GlcNAc...) asparagine glycan. In terms of domain architecture, Fibronectin type-III 1 spans 90–181 (APGNVTISEL…TAKLFSTLPT (92 aa)). A WR1 domain is found at 185 to 227 (PLCTIGEPIYMNDGRVMICDAVNPCPNGFRCTGAGSDLSYCCP). N-linked (GlcNAc...) asparagine glycosylation is found at Asn257, Asn374, Asn409, Asn442, Asn482, Asn507, and Asn552. Fibronectin type-III domains are found at residues 330–417 (AVRN…TKPA) and 427–523 (APEK…AQKD). An Ig-like C2-type domain is found at 619 to 710 (ASVTMKKDKI…SRVEASSEVI (92 aa)). An intrachain disulfide couples Cys640 to Cys693. Asn753 carries N-linked (GlcNAc...) asparagine glycosylation. Residues 817 to 909 (APSEVSNVRI…SAIPKDSEPR (93 aa)) form the Fibronectin type-III 4 domain. The chain crosses the membrane as a helical span at residues 919-939 (AFWIVVILVVFGVLIAGLAVL). The Cytoplasmic portion of the chain corresponds to 940–1029 (SKRRELPYPI…NGMRYAKLET (90 aa)). A disordered region spans residues 988–1021 (SATTGTAAATQSEWQSANLEANSTTDNSHEYRNG). Residues 998–1013 (QSEWQSANLEANSTTD) show a composition bias toward polar residues.

The protein localises to the cell membrane. The polypeptide is Ig-like and fibronectin type-III domain-containing protein 1 (Caenorhabditis elegans).